The primary structure comprises 225 residues: PKHD-type hydroxylase KPK_3192 (225 aa).

The 100-residue stretch at 78–177 (TISAPLFNRY…RQASFLWIQS (100 aa)) folds into the Fe2OG dioxygenase domain. 3 residues coordinate Fe cation: histidine 96, aspartate 98, and histidine 158. Residue arginine 168 coordinates 2-oxoglutarate.

Requires Fe(2+) as cofactor. L-ascorbate is required as a cofactor.

This is PKHD-type hydroxylase KPK_3192 from Klebsiella pneumoniae (strain 342).